Consider the following 440-residue polypeptide: Thymidine phosphorylase (440 aa).

It belongs to the thymidine/pyrimidine-nucleoside phosphorylase family. As to quaternary structure, homodimer.

The enzyme catalyses thymidine + phosphate = 2-deoxy-alpha-D-ribose 1-phosphate + thymine. It functions in the pathway pyrimidine metabolism; dTMP biosynthesis via salvage pathway; dTMP from thymine: step 1/2. In terms of biological role, the enzymes which catalyze the reversible phosphorolysis of pyrimidine nucleosides are involved in the degradation of these compounds and in their utilization as carbon and energy sources, or in the rescue of pyrimidine bases for nucleotide synthesis. The protein is Thymidine phosphorylase of Burkholderia pseudomallei (strain K96243).